Consider the following 208-residue polypeptide: Uracil phosphoribosyltransferase (208 aa).

Residues arginine 78, arginine 103, and 130-138 contribute to the 5-phospho-alpha-D-ribose 1-diphosphate site; that span reads DPMLATGGS. Uracil is bound by residues isoleucine 193 and 198–200; that span reads GDA. Aspartate 199 lines the 5-phospho-alpha-D-ribose 1-diphosphate pocket.

It belongs to the UPRTase family. The cofactor is Mg(2+).

It catalyses the reaction UMP + diphosphate = 5-phospho-alpha-D-ribose 1-diphosphate + uracil. Its pathway is pyrimidine metabolism; UMP biosynthesis via salvage pathway; UMP from uracil: step 1/1. With respect to regulation, allosterically activated by GTP. Catalyzes the conversion of uracil and 5-phospho-alpha-D-ribose 1-diphosphate (PRPP) to UMP and diphosphate. This chain is Uracil phosphoribosyltransferase, found in Aliivibrio salmonicida (strain LFI1238) (Vibrio salmonicida (strain LFI1238)).